A 200-amino-acid chain; its full sequence is Vacuolar iron transporter homolog 3 (200 aa).

The Cytoplasmic portion of the chain corresponds to 1–31; that stretch reads MESHNTLNLDMEKDQEKAFDYSKRAQWLRAA. Residues 32–52 traverse the membrane as a helical segment; the sequence is VLGANDGLVSTASLMMGVGAV. Topologically, residues 53-59 are vacuolar; sequence KQNVKIM. A helical transmembrane segment spans residues 60 to 80; that stretch reads ILTGFAGLVAGACSMAIGEFV. Topologically, residues 81–113 are cytoplasmic; that stretch reads SVYSQYDIEVAQMKRETGGEIEKEKLPSPTQAA. Residues 114–134 traverse the membrane as a helical segment; it reads AASALAFSLGAMVPLLAAAFV. The Vacuolar portion of the chain corresponds to 135–140; that stretch reads KEYKVR. Residues 141–161 traverse the membrane as a helical segment; that stretch reads IGAIVAAVTLALVMFGWLGAV. At 162-173 the chain is on the cytoplasmic side; the sequence is LGKAPVVKSSLR. A helical membrane pass occupies residues 174–194; the sequence is VLVGGWLAMAITYGFTKLIGS. At 195 to 200 the chain is on the vacuolar side; the sequence is HSHMYV.

The protein belongs to the CCC1 family.

It is found in the vacuole membrane. The catalysed reaction is Fe(2+)(in) = Fe(2+)(out). Its function is as follows. Probable vacuolar iron transporter that may be involved in the regulation of iron distribution throughout the plant. The sequence is that of Vacuolar iron transporter homolog 3 from Arabidopsis thaliana (Mouse-ear cress).